We begin with the raw amino-acid sequence, 456 residues long: E3 ubiquitin-protein ligase RNF25 (456 aa).

Positions 18–127 (SEVEVLESIY…EKGKEILTDN (110 aa)) constitute an RWD domain. Zn(2+) is bound by residues cysteine 134, cysteine 137, cysteine 152, histidine 154, histidine 157, cysteine 160, cysteine 195, and cysteine 198. The RING-type zinc-finger motif lies at 134–199 (CVICLYGFQE…AVGVQCPVCR (66 aa)). The disordered stretch occupies residues 269-456 (LEPESAVDVS…PLGLESEEGS (188 aa)). Positions 288-332 (SAEQSTSLADQSTLPTSLPMTTQYTYEKTSGAGPNQQRPGETQKS) are enriched in polar residues. 2 stretches are compositionally biased toward basic and acidic residues: residues 364-388 (SEIHELPPPEKPLKETVDLKAEPRN) and 410-421 (RTRDCARWERSK).

It belongs to the RNF25 family. Interacts with UBE2D2, and may also interact with UBE2E1 and UBE2E3. Interacts with RELA/p65. Ubiquitinated; autoubiquitinated. In terms of tissue distribution, ubiquitous.

The protein localises to the cytoplasm. The catalysed reaction is S-ubiquitinyl-[E2 ubiquitin-conjugating enzyme]-L-cysteine + [acceptor protein]-L-lysine = [E2 ubiquitin-conjugating enzyme]-L-cysteine + N(6)-ubiquitinyl-[acceptor protein]-L-lysine.. Its pathway is protein modification; protein ubiquitination. E3 ubiquitin-protein ligase that plays a key role in the RNF14-RNF25 translation quality control pathway, a pathway that takes place when a ribosome has stalled during translation, and which promotes ubiquitination and degradation of translation factors on stalled ribosomes. Catalyzes ubiquitination of RPS27A in response to ribosome collisions, promoting activation of RNF14. RNF25 catalyzes ubiquitination of other ribosomal proteins on stalled ribosomes, such as RPL0, RPL1, RPL12, RPS13 and RPS17. Also involved in ubiquitination and degradation of stalled ETF1/eRF1. Independently of its function in the response to stalled ribosomes, mediates ubiquitination and subsequent proteasomal degradation of NKD2. May also stimulate transcription mediated by NF-kappa-B via its interaction with RELA/p65. The sequence is that of E3 ubiquitin-protein ligase RNF25 from Mus musculus (Mouse).